The primary structure comprises 128 residues: Aspartate 1-decarboxylase (128 aa).

The Schiff-base intermediate with substrate; via pyruvic acid role is filled by serine 25. The residue at position 25 (serine 25) is a Pyruvic acid (Ser). Position 57 (threonine 57) interacts with substrate. Tyrosine 58 (proton donor) is an active-site residue. 73-75 is a substrate binding site; it reads GAA.

This sequence belongs to the PanD family. Heterooctamer of four alpha and four beta subunits. It depends on pyruvate as a cofactor. Post-translationally, is synthesized initially as an inactive proenzyme, which is activated by self-cleavage at a specific serine bond to produce a beta-subunit with a hydroxyl group at its C-terminus and an alpha-subunit with a pyruvoyl group at its N-terminus.

Its subcellular location is the cytoplasm. It carries out the reaction L-aspartate + H(+) = beta-alanine + CO2. Its pathway is cofactor biosynthesis; (R)-pantothenate biosynthesis; beta-alanine from L-aspartate: step 1/1. Its function is as follows. Catalyzes the pyruvoyl-dependent decarboxylation of aspartate to produce beta-alanine. This is Aspartate 1-decarboxylase from Moorella thermoacetica (strain ATCC 39073 / JCM 9320).